We begin with the raw amino-acid sequence, 119 residues long: Phosphoribosyl-AMP cyclohydrolase (119 aa).

Position 77 (Asp-77) interacts with Mg(2+). Residue Cys-78 participates in Zn(2+) binding. 2 residues coordinate Mg(2+): Asp-79 and Asp-81. Residues Cys-94 and Cys-101 each coordinate Zn(2+).

The protein belongs to the PRA-CH family. As to quaternary structure, homodimer. The cofactor is Mg(2+). It depends on Zn(2+) as a cofactor.

It localises to the cytoplasm. It catalyses the reaction 1-(5-phospho-beta-D-ribosyl)-5'-AMP + H2O = 1-(5-phospho-beta-D-ribosyl)-5-[(5-phospho-beta-D-ribosylamino)methylideneamino]imidazole-4-carboxamide. The protein operates within amino-acid biosynthesis; L-histidine biosynthesis; L-histidine from 5-phospho-alpha-D-ribose 1-diphosphate: step 3/9. Its function is as follows. Catalyzes the hydrolysis of the adenine ring of phosphoribosyl-AMP. The polypeptide is Phosphoribosyl-AMP cyclohydrolase (Cereibacter sphaeroides (strain ATCC 17025 / ATH 2.4.3) (Rhodobacter sphaeroides)).